The sequence spans 87 residues: Small ribosomal subunit protein uS17 (87 aa).

It belongs to the universal ribosomal protein uS17 family. As to quaternary structure, part of the 30S ribosomal subunit.

One of the primary rRNA binding proteins, it binds specifically to the 5'-end of 16S ribosomal RNA. This chain is Small ribosomal subunit protein uS17, found in Aster yellows witches'-broom phytoplasma (strain AYWB).